A 238-amino-acid chain; its full sequence is Chromosome partition protein MukE (238 aa).

Belongs to the MukE family. Interacts, and probably forms a ternary complex, with MukF and MukB. The complex formation is stimulated by calcium or magnesium.

The protein resides in the cytoplasm. It localises to the nucleoid. Involved in chromosome condensation, segregation and cell cycle progression. May participate in facilitating chromosome segregation by condensation DNA from both sides of a centrally located replisome during cell division. Probably acts via its interaction with MukB and MukF. This chain is Chromosome partition protein MukE, found in Haemophilus ducreyi (strain 35000HP / ATCC 700724).